The sequence spans 193 residues: Adenylate kinase (193 aa).

Position 10–15 (10–15 (GAGKGT)) interacts with ATP. The segment at 30–59 (STGDMLRAAVKAGTPIGLKAKAVMDAGGLV) is NMP. Residues threonine 31, arginine 36, 57–59 (GLV), 85–88 (GFPR), and glutamine 92 contribute to the AMP site. Residues 126 to 142 (KRAKETLAAGGTVRADD) are LID. Residue arginine 127 coordinates ATP. Residues arginine 139 and arginine 150 each contribute to the AMP site. Residue alanine 178 coordinates ATP.

The protein belongs to the adenylate kinase family. Monomer.

The protein localises to the cytoplasm. The enzyme catalyses AMP + ATP = 2 ADP. It participates in purine metabolism; AMP biosynthesis via salvage pathway; AMP from ADP: step 1/1. Its function is as follows. Catalyzes the reversible transfer of the terminal phosphate group between ATP and AMP. Plays an important role in cellular energy homeostasis and in adenine nucleotide metabolism. The chain is Adenylate kinase from Beijerinckia indica subsp. indica (strain ATCC 9039 / DSM 1715 / NCIMB 8712).